The sequence spans 405 residues: N-methyltransferase nanE (405 aa).

Residues 238–239, aspartate 261, and 290–291 each bind S-adenosyl-L-methionine; these read GG and HH.

Belongs to the class I-like SAM-binding methyltransferase superfamily. Cation-independent O-methyltransferase family.

Its pathway is secondary metabolite biosynthesis. Its function is as follows. N-methyltransferase; part of the gene cluster that mediates the biosynthesis of the benzazepine alkaloid nanangelenin A which contains an unprecedented 3,4-dihydro-1-benzazepine-2,5-dione-N-prenyl-N-acetoxy-anthranilamide scaffold. The first step of nanangelenin biosynthesis is catalyzed by the indoleamine 2,3-dioxygenase nanC which produces N-formyl-kynurenine through the catabolism of tryptophan. The two-module NRPS nanA then utilizes anthranilate (Ant) and L-kynurenine (L-Kyn) to assemble the dipeptide product nanangelenin B. The first adenylation domain of nanA (A1) loads anthranilate onto the T1 domain, while A2 loads kynurenine, generated through spontaneous nonenzymatic deformylation of the nanC-supplied N-formyl-kynurenine. The peptide bond formation between the tethered amino acids is catalyzed by the first condensation domain (C1) between anthranilate's carbonyl carbon and kynurenine's aliphatic primary amine. The second C domain (C2) catalyzes the final cyclization event between the aromatic amine of kynurenine and the tethered carbonyl carbon, yielding nanangelenin B. The terminal T3 domain enhances the catalytic efficiency of C2, suggesting the T2-tethered Ant-L-Kyn is transferred to T3 prior to cyclization by C2. Once released from nanA, nanangelenin B is then prenylated by the prenyltransferase nanD to form nanangelenin C. Nanangelenin C is then N-hydroxylated by the FAD-dependent monooxygenase nanF and further acetylated by the acetyltransferase nanB to yield nanangelenin F. Finally, the N-methyltransferase nanE methylates the amide nitrogen of 1-benzazepine to convert nanangelenin F into nanangelenin A. NanE is also able to methylate most of the intermediates of the pathway such as nanangelenin B and nanangelenin C to produce nanangelenin D and nanangelenin E, respectively. This is N-methyltransferase nanE from Aspergillus nanangensis.